The chain runs to 459 residues: XK-related protein 3 (459 aa).

Helical transmembrane passes span 35–55 (FSII…LYMF), 68–88 (SFTI…LMFF), 97–117 (AALL…LHTI), 169–189 (IQAF…SLTI), 199–219 (LMTF…ILAI), 238–258 (VVMW…FFIA), 264–284 (SLPV…LEFW), 300–320 (MVGT…INFS), 345–365 (ILHY…FRFF), and 377–397 (LIAV…LLFY).

The protein belongs to the XK family. In terms of tissue distribution, expressed predominantly, if not exclusively, in testis.

It is found in the cell membrane. The protein is XK-related protein 3 (XKR3) of Homo sapiens (Human).